We begin with the raw amino-acid sequence, 106 residues long: Large ribosomal subunit protein uL24 (106 aa).

The protein belongs to the universal ribosomal protein uL24 family. Part of the 50S ribosomal subunit.

Its function is as follows. One of two assembly initiator proteins, it binds directly to the 5'-end of the 23S rRNA, where it nucleates assembly of the 50S subunit. In terms of biological role, one of the proteins that surrounds the polypeptide exit tunnel on the outside of the subunit. The sequence is that of Large ribosomal subunit protein uL24 from Paramagnetospirillum magneticum (strain ATCC 700264 / AMB-1) (Magnetospirillum magneticum).